The chain runs to 450 residues: Glucose-6-phosphate isomerase (450 aa).

The Proton donor role is filled by glutamate 291. Active-site residues include histidine 312 and lysine 426.

Belongs to the GPI family.

The protein resides in the cytoplasm. It catalyses the reaction alpha-D-glucose 6-phosphate = beta-D-fructose 6-phosphate. The protein operates within carbohydrate biosynthesis; gluconeogenesis. It participates in carbohydrate degradation; glycolysis; D-glyceraldehyde 3-phosphate and glycerone phosphate from D-glucose: step 2/4. Catalyzes the reversible isomerization of glucose-6-phosphate to fructose-6-phosphate. The sequence is that of Glucose-6-phosphate isomerase from Clostridium novyi (strain NT).